The sequence spans 164 residues: HTH-type transcriptional regulator IscR (164 aa).

An HTH rrf2-type domain is found at 2–131 (RLTSKGRYAV…NNITLGELVN (130 aa)). The segment at residues 28–51 (LADISERQGISLSYLEQLFSRLRK) is a DNA-binding region (H-T-H motif). [2Fe-2S] cluster is bound by residues C92, C98, and C104.

[2Fe-2S] cluster is required as a cofactor.

Its function is as follows. Regulates the transcription of several operons and genes involved in the biogenesis of Fe-S clusters and Fe-S-containing proteins. The sequence is that of HTH-type transcriptional regulator IscR from Salmonella agona (strain SL483).